Consider the following 322-residue polypeptide: MSSTQDSKAQTLNSNPEILLRKRRNADRTRIERQELAKKKREEQIKKKRSNKNKFVRAESIVAKTLATSREKERIKRVSILEDKKAKNETQHIASGKDFILKITEKANGAEENSVDLEETEEEEDDGLIREKTTYDGKPALLFIVRVRGPLAVNIPNKAFKILSLLRLVETNTGVFVKLTKNVYPLLKVIAPYVVIGKPSLSSIRSLIQKRGRIIYKGENEAEPHEIVLNDNNIVEEQLGDHGIICVEDIIHEIATMGESFSVCNFFLQPFKLNREVSGFGSLNRLRKIKQREAESRTRQFSNAATAPVIEVDIDSLLAKLN.

Residues 1-16 (MSSTQDSKAQTLNSNP) are compositionally biased toward polar residues. Positions 1–52 (MSSTQDSKAQTLNSNPEILLRKRRNADRTRIERQELAKKKREEQIKKKRSNK) are disordered. The residue at position 2 (serine 2) is an N-acetylserine. Residue serine 14 is modified to Phosphoserine. Basic and acidic residues predominate over residues 26-45 (ADRTRIERQELAKKKREEQI). Threonine 120 carries the phosphothreonine modification. A Phosphoserine modification is found at serine 278.

Belongs to the universal ribosomal protein uL30 family.

Its subcellular location is the nucleus. It localises to the nucleolus. Functionally, involved in the biogenesis of the 60S ribosomal subunit. May act as a specificity factor that binds precursor rRNAs and tethers the enzymes that carry out the early 5' to 3' exonucleolytic reactions that generate the mature rRNAs. The protein is Ribosome biogenesis protein RLP7 (RLP7) of Saccharomyces cerevisiae (strain ATCC 204508 / S288c) (Baker's yeast).